Consider the following 134-residue polypeptide: Large ribosomal subunit protein eL32 (134 aa).

Belongs to the eukaryotic ribosomal protein eL32 family.

The protein is Large ribosomal subunit protein eL32 (RpL32) of Drosophila affinis (Fruit fly).